The chain runs to 813 residues: Ribonuclease R (813 aa).

In terms of domain architecture, RNB spans 260–587; it reads RVDLRDLPLV…LHRAIKYLLA (328 aa). N6-acetyllysine; by PatZ is present on K544. The region spanning 644–725 is the S1 motif domain; it reads GNVFKGVISS…DERKIDFSLI (82 aa). A disordered region spans residues 731 to 813; that stretch reads PRNVGKTARE…KRAAKKKVAE (83 aa). Composition is skewed to basic and acidic residues over residues 737 to 749 and 761 to 774; these read TARE…DAGK and VNFE…GEKK. Basic residues predominate over residues 775 to 791; sequence TKPKAAKKDARKAKKPS. The segment covering 792 to 801 has biased composition (low complexity); that stretch reads AKTQKIAAAT. The segment covering 802–813 has biased composition (basic residues); that stretch reads KAKRAAKKKVAE.

This sequence belongs to the RNR ribonuclease family. RNase R subfamily. As to quaternary structure, monomer. Mg(2+) is required as a cofactor. In terms of processing, acetylated at Lys-544 by PatZ during exponential growth phase. Acetylation alters RNase R structure and enhances binding of SsrA/tmRNA and SmpB, leading to instability and degradation of RNase R. Not acetylated and stable in stationary phase cells.

Its subcellular location is the cytoplasm. It carries out the reaction Exonucleolytic cleavage in the 3'- to 5'-direction to yield nucleoside 5'-phosphates.. With respect to regulation, stimulated by the presence of a monovalent cation. Highly unstable in exponential growth phase. This instability is due to the binding of SsrA/tmRNA and its associated protein SmpB to the C-terminal region of RNase R. In contrast, RNase R becomes stabilized upon entry into stationary phase. The difference in stability between exponential and stationary phase is due to the acetylation of a single lysine residue. Functionally, 3'-5' exoribonuclease that releases 5'-nucleoside monophosphates and is involved in maturation of structured RNAs (rRNAs, tRNAs and SsrA/tmRNA). In stationary phase, involved in the post-transcriptional regulation of ompA mRNA stability. Shortens RNA processively to di- and trinucleotides. In vitro, exhibits helicase activity, which is independent of its RNase activity. RNases 2 and R (rnb and this entry) contribute to rRNA degradation during starvation, while RNase R and PNPase (this entry and pnp) are the major contributors to quality control of rRNA during steady state growth. Required for the expression of virulence genes in enteroinvasive strains of E.coli. The polypeptide is Ribonuclease R (rnr) (Escherichia coli (strain K12)).